The primary structure comprises 243 residues: Orotidine 5'-phosphate decarboxylase (243 aa).

Substrate-binding positions include Asp19, Lys41, 69-78, Thr124, Arg185, Gln194, Gly214, and Arg215; that span reads DLKFFDIPAT. The active-site Proton donor is Lys71.

The protein belongs to the OMP decarboxylase family. Type 1 subfamily. Homodimer.

The catalysed reaction is orotidine 5'-phosphate + H(+) = UMP + CO2. It participates in pyrimidine metabolism; UMP biosynthesis via de novo pathway; UMP from orotate: step 2/2. Functionally, catalyzes the decarboxylation of orotidine 5'-monophosphate (OMP) to uridine 5'-monophosphate (UMP). This is Orotidine 5'-phosphate decarboxylase from Xanthomonas campestris pv. campestris (strain 8004).